Here is a 326-residue protein sequence, read N- to C-terminus: Protoheme IX farnesyltransferase (326 aa).

A run of 8 helical transmembrane segments spans residues 35–55 (LIPL…GWPL), 60–80 (LICT…LNCL), 106–126 (TAFI…VSGV), 129–149 (LAAG…TALL), 157–177 (IVVG…AATG), 185–205 (WLFA…ALLL), 238–258 (VLLS…YGLM), and 289–309 (WSIL…SALA).

This sequence belongs to the UbiA prenyltransferase family. Protoheme IX farnesyltransferase subfamily.

Its subcellular location is the cell inner membrane. The enzyme catalyses heme b + (2E,6E)-farnesyl diphosphate + H2O = Fe(II)-heme o + diphosphate. It functions in the pathway porphyrin-containing compound metabolism; heme O biosynthesis; heme O from protoheme: step 1/1. Its function is as follows. Converts heme B (protoheme IX) to heme O by substitution of the vinyl group on carbon 2 of heme B porphyrin ring with a hydroxyethyl farnesyl side group. The sequence is that of Protoheme IX farnesyltransferase from Synechococcus sp. (strain CC9902).